The primary structure comprises 380 residues: tRNA-specific 2-thiouridylase MnmA (380 aa).

ATP is bound by residues 14 to 21 (GLSGGVDS) and Met40. The tract at residues 100–102 (NPD) is interaction with target base in tRNA. Catalysis depends on Cys105, which acts as the Nucleophile. Cys105 and Cys203 form a disulfide bridge. Gly129 is a binding site for ATP. The tract at residues 153-155 (KDQ) is interaction with tRNA. The active-site Cysteine persulfide intermediate is Cys203. An interaction with tRNA region spans residues 322–323 (RY).

Belongs to the MnmA/TRMU family.

Its subcellular location is the cytoplasm. The catalysed reaction is S-sulfanyl-L-cysteinyl-[protein] + uridine(34) in tRNA + AH2 + ATP = 2-thiouridine(34) in tRNA + L-cysteinyl-[protein] + A + AMP + diphosphate + H(+). In terms of biological role, catalyzes the 2-thiolation of uridine at the wobble position (U34) of tRNA, leading to the formation of s(2)U34. The chain is tRNA-specific 2-thiouridylase MnmA from Leptothrix cholodnii (strain ATCC 51168 / LMG 8142 / SP-6) (Leptothrix discophora (strain SP-6)).